A 274-amino-acid polypeptide reads, in one-letter code: Endonuclease 8-like L720 (274 aa).

The FPG-type; degenerate zinc finger occupies Arg241–Leu274.

It belongs to the FPG family.

This chain is Endonuclease 8-like L720, found in Acanthamoeba polyphaga mimivirus (APMV).